The sequence spans 128 residues: Protein C10 (128 aa).

This sequence belongs to the UPF0456 family.

Its subcellular location is the cytoplasm. The sequence is that of Protein C10 from Xenopus laevis (African clawed frog).